Consider the following 64-residue polypeptide: UPF0434 protein BAB2_0345 (64 aa).

The protein belongs to the UPF0434 family.

This is UPF0434 protein BAB2_0345 from Brucella abortus (strain 2308).